The sequence spans 1034 residues: Multidrug export protein AcrF (1034 aa).

Residues 1 to 9 (MANFFIRRP) lie on the Cytoplasmic side of the membrane. The helical transmembrane segment at 10–28 (IFAWVLAIILMMAGALAIL) threads the bilayer. Topologically, residues 29–339 (QLPVAQYPTI…TPFVQLSIHE (311 aa)) are periplasmic. Residues 340-359 (VVKTLFEAIMLVFLVMYLFL) form a helical membrane-spanning segment. Residues 360–365 (QNMRAT) lie on the Cytoplasmic side of the membrane. Residues 366–385 (LIPTIAVPVVLLGTFAILAA) traverse the membrane as a helical segment. Over 386-391 (FGYSIN) the chain is Periplasmic. A helical membrane pass occupies residues 392 to 413 (TLTMFGMVLAIGLLVDDAIVVV). Residues 414–441 (ENVERVMMEDKLPPKEATEKSMSQIQGA) are Cytoplasmic-facing. A helical transmembrane segment spans residues 442–460 (LVGIAMVLSAVFIPMAFFG). Residues 461–473 (GSTGAIYRQFSIT) are Periplasmic-facing. Residues 474–496 (IVSAMALSVLVALILTPALCATL) traverse the membrane as a helical segment. The Cytoplasmic portion of the chain corresponds to 497–537 (LKPVSAEHHENKGGFFGWFNTTFDHSVNHYTNSVGKILGST). Residues 538 to 556 (GRYLLIYALIVAGMVVLFL) form a helical membrane-spanning segment. Over 557-871 (RLPSSFLPEE…SYQERLSGNQ (315 aa)) the chain is Periplasmic. Residues 872 to 891 (APALVAISFVVVFLCLAALY) form a helical membrane-spanning segment. Residues 892–897 (ESWSIP) lie on the Cytoplasmic side of the membrane. Residues 898 to 917 (VSVMLVVPLGIVGVLLAATL) form a helical membrane-spanning segment. The Periplasmic segment spans residues 918 to 923 (FNQKND). A helical transmembrane segment spans residues 924 to 945 (VYFMVGLLTTIGLSAKNAILIV). Over 946–973 (EFAKDLMEKEGKGVVEATLMAVRMRLRP) the chain is Cytoplasmic. Residues 974 to 992 (ILMTSLAFILGVLPLAISN) form a helical membrane-spanning segment. Residues 993–1005 (GAGSGAQNAVGIG) are Periplasmic-facing. Residues 1006–1028 (VMGGMVSATLLAIFFVPVFFVVI) form a helical membrane-spanning segment. At 1029-1034 (RRCFKG) the chain is on the cytoplasmic side.

It belongs to the resistance-nodulation-cell division (RND) (TC 2.A.6) family. In terms of assembly, part of the tripartite efflux system AcrEF-TolC, which is composed of an inner membrane transporter, AcrF, a periplasmic membrane fusion protein, AcrE, and an outer membrane component, TolC. The complex forms a large protein conduit and can translocate molecules across both the inner and outer membranes.

The protein localises to the cell inner membrane. In terms of biological role, part of the tripartite efflux system AcrEF-TolC. Involved in the efflux of indole and organic solvents. This chain is Multidrug export protein AcrF (acrF), found in Escherichia coli (strain K12).